A 381-amino-acid polypeptide reads, in one-letter code: L-lactate dehydrogenase (381 aa).

The region spanning 1-380 (MIISASTDYR…SADSLVRELG (380 aa)) is the FMN hydroxy acid dehydrogenase domain. A substrate-binding site is contributed by tyrosine 24. Positions 106 and 127 each coordinate FMN. Residue tyrosine 129 coordinates substrate. FMN is bound at residue threonine 155. Arginine 164 contacts substrate. Position 251 (lysine 251) interacts with FMN. The Proton acceptor role is filled by histidine 275. Arginine 278 contributes to the substrate binding site. 306 to 330 (DSGIRTGLDVVRMIALGADSVLLGR) is an FMN binding site.

The protein belongs to the FMN-dependent alpha-hydroxy acid dehydrogenase family. In terms of assembly, homotetramer. Requires FMN as cofactor.

The protein resides in the cell inner membrane. It carries out the reaction (S)-lactate + A = pyruvate + AH2. Catalyzes the conversion of L-lactate to pyruvate. Is coupled to the respiratory chain. This chain is L-lactate dehydrogenase, found in Pseudomonas aeruginosa (strain LESB58).